The chain runs to 592 residues: A-type ATP synthase subunit A (592 aa).

ATP is bound at residue 231–238; sequence GGFGTGKT.

Belongs to the ATPase alpha/beta chains family. Has multiple subunits with at least A(3), B(3), C, D, E, F, H, I and proteolipid K(x).

Its subcellular location is the cell membrane. It carries out the reaction ATP + H2O + 4 H(+)(in) = ADP + phosphate + 5 H(+)(out). In terms of biological role, component of the A-type ATP synthase that produces ATP from ADP in the presence of a proton gradient across the membrane. The A chain is the catalytic subunit. The sequence is that of A-type ATP synthase subunit A from Staphylothermus marinus (strain ATCC 43588 / DSM 3639 / JCM 9404 / F1).